The sequence spans 140 residues: 3-hydroxyacyl-[acyl-carrier-protein] dehydratase FabZ (140 aa).

Histidine 47 is a catalytic residue.

The protein belongs to the thioester dehydratase family. FabZ subfamily.

It is found in the cytoplasm. It catalyses the reaction a (3R)-hydroxyacyl-[ACP] = a (2E)-enoyl-[ACP] + H2O. Involved in unsaturated fatty acids biosynthesis. Catalyzes the dehydration of short chain beta-hydroxyacyl-ACPs and long chain saturated and unsaturated beta-hydroxyacyl-ACPs. The sequence is that of 3-hydroxyacyl-[acyl-carrier-protein] dehydratase FabZ from Streptococcus mutans serotype c (strain ATCC 700610 / UA159).